Consider the following 283-residue polypeptide: Phosphatidylglycerol--prolipoprotein diacylglyceryl transferase (283 aa).

Transmembrane regions (helical) follow at residues 21–41, 60–80, 95–115, 124–144, 176–196, 203–223, and 239–259; these read LAIR…LWLA, LLFA…VLFY, VWTG…AMLW, FFTI…AGRL, SQLY…NWFI, GAVS…VEYV, and MGQI…VWAF. Residue Arg-143 coordinates a 1,2-diacyl-sn-glycero-3-phospho-(1'-sn-glycerol).

This sequence belongs to the Lgt family.

The protein localises to the cell inner membrane. It carries out the reaction L-cysteinyl-[prolipoprotein] + a 1,2-diacyl-sn-glycero-3-phospho-(1'-sn-glycerol) = an S-1,2-diacyl-sn-glyceryl-L-cysteinyl-[prolipoprotein] + sn-glycerol 1-phosphate + H(+). It participates in protein modification; lipoprotein biosynthesis (diacylglyceryl transfer). Its function is as follows. Catalyzes the transfer of the diacylglyceryl group from phosphatidylglycerol to the sulfhydryl group of the N-terminal cysteine of a prolipoprotein, the first step in the formation of mature lipoproteins. The chain is Phosphatidylglycerol--prolipoprotein diacylglyceryl transferase from Aliivibrio salmonicida (strain LFI1238) (Vibrio salmonicida (strain LFI1238)).